Consider the following 236-residue polypeptide: Biosynthetic peptidoglycan transglycosylase (236 aa).

Residues 12–31 (ALLWFAASSIVLVLVFRWVP) form a helical membrane-spanning segment.

Belongs to the glycosyltransferase 51 family.

It localises to the cell inner membrane. The enzyme catalyses [GlcNAc-(1-&gt;4)-Mur2Ac(oyl-L-Ala-gamma-D-Glu-L-Lys-D-Ala-D-Ala)](n)-di-trans,octa-cis-undecaprenyl diphosphate + beta-D-GlcNAc-(1-&gt;4)-Mur2Ac(oyl-L-Ala-gamma-D-Glu-L-Lys-D-Ala-D-Ala)-di-trans,octa-cis-undecaprenyl diphosphate = [GlcNAc-(1-&gt;4)-Mur2Ac(oyl-L-Ala-gamma-D-Glu-L-Lys-D-Ala-D-Ala)](n+1)-di-trans,octa-cis-undecaprenyl diphosphate + di-trans,octa-cis-undecaprenyl diphosphate + H(+). It functions in the pathway cell wall biogenesis; peptidoglycan biosynthesis. Peptidoglycan polymerase that catalyzes glycan chain elongation from lipid-linked precursors. The chain is Biosynthetic peptidoglycan transglycosylase from Pseudomonas putida (strain GB-1).